The sequence spans 278 residues: Nucleotide-binding protein Tmel_1373 (278 aa).

Residue glycine 10–serine 17 coordinates ATP. Aspartate 58–serine 61 serves as a coordination point for GTP.

This sequence belongs to the RapZ-like family.

Functionally, displays ATPase and GTPase activities. This chain is Nucleotide-binding protein Tmel_1373, found in Thermosipho melanesiensis (strain DSM 12029 / CIP 104789 / BI429).